The chain runs to 912 residues: Eukaryotic translation initiation factor 3 subunit C (912 aa).

A disordered region spans residues Met1–Asp44. The segment covering Gly8 to Glu21 has biased composition (low complexity). Phosphoserine is present on residues Ser9, Ser11, Ser13, Ser15, Ser16, Ser18, and Ser39. Lys99 bears the N6-acetyllysine mark. 2 disordered regions span residues Thr157–Gly305 and Gln521–Glu541. Residues Ser166, Ser178, Ser181, and Ser182 each carry the phosphoserine modification. Residues Ser166–Gly190 are compositionally biased toward acidic residues. Positions Lys199–Glu215 are enriched in basic and acidic residues. Positions Asp216–Ala229 are enriched in acidic residues. The segment covering Pro260 to Ala277 has biased composition (basic and acidic residues). Positions Gln521 to Lys530 are enriched in polar residues. The residue at position 523 (Thr523) is a Phosphothreonine. At Lys642 the chain carries N6-acetyllysine. The PCI domain occupies Phe672–Pro848. Positions Phe884–Tyr912 are disordered. Residues Arg885–Met898 are compositionally biased toward basic and acidic residues. At Ser908 the chain carries Phosphoserine.

This sequence belongs to the eIF-3 subunit C family. Component of the eukaryotic translation initiation factor 3 (eIF-3) complex, which is composed of 13 subunits: EIF3A, EIF3B, EIF3C, EIF3D, EIF3E, EIF3F, EIF3G, EIF3H, EIF3I, EIF3J, EIF3K, EIF3L and EIF3M. The eIF-3 complex appears to include 3 stable modules: module A is composed of EIF3A, EIF3B, EIF3G and EIF3I; module B is composed of EIF3F, EIF3H, and EIF3M; and module C is composed of EIF3C, EIF3D, EIF3E, EIF3K and EIF3L. EIF3C of module C binds EIF3B of module A and EIF3H of module B, thereby linking the three modules. EIF3J is a labile subunit that binds to the eIF-3 complex via EIF3B. The eIF-3 complex interacts with RPS6KB1 under conditions of nutrient depletion. Mitogenic stimulation leads to binding and activation of a complex composed of MTOR and RPTOR, leading to phosphorylation and release of RPS6KB1 and binding of EIF4B to eIF-3. Identified in a HCV IRES-mediated translation complex, at least composed of EIF3C, IGF2BP1, RPS3 and HCV RNA-replicon. Interacts with ALKBH4, IFIT1 and IFIT2. Interacts with BZW2/5MP1. Post-translationally, phosphorylated. Phosphorylation is enhanced upon serum stimulation.

It is found in the cytoplasm. Its function is as follows. Component of the eukaryotic translation initiation factor 3 (eIF-3) complex, which is required for several steps in the initiation of protein synthesis. The eIF-3 complex associates with the 40S ribosome and facilitates the recruitment of eIF-1, eIF-1A, eIF-2:GTP:methionyl-tRNAi and eIF-5 to form the 43S pre-initiation complex (43S PIC). The eIF-3 complex stimulates mRNA recruitment to the 43S PIC and scanning of the mRNA for AUG recognition. The eIF-3 complex is also required for disassembly and recycling of post-termination ribosomal complexes and subsequently prevents premature joining of the 40S and 60S ribosomal subunits prior to initiation. The eIF-3 complex specifically targets and initiates translation of a subset of mRNAs involved in cell proliferation, including cell cycling, differentiation and apoptosis, and uses different modes of RNA stem-loop binding to exert either translational activation or repression. This Bos taurus (Bovine) protein is Eukaryotic translation initiation factor 3 subunit C.